The primary structure comprises 146 residues: Large ribosomal subunit protein uL15 (146 aa).

A disordered region spans residues 1–46 (MLHQIKPFKGARKTVKRLGRGCGSGTGKTSGKGHKGQLARSGGGVR). A compositionally biased stretch (basic residues) spans 9–19 (KGARKTVKRLG). Gly residues predominate over residues 20 to 30 (RGCGSGTGKTS).

The protein belongs to the universal ribosomal protein uL15 family. In terms of assembly, part of the 50S ribosomal subunit.

Binds to the 23S rRNA. The sequence is that of Large ribosomal subunit protein uL15 from Phytoplasma mali (strain AT).